A 196-amino-acid chain; its full sequence is Probable malonic semialdehyde reductase RutE (196 aa).

This sequence belongs to the nitroreductase family. HadB/RutE subfamily. FMN serves as cofactor.

It catalyses the reaction 3-hydroxypropanoate + NADP(+) = 3-oxopropanoate + NADPH + H(+). Its function is as follows. May reduce toxic product malonic semialdehyde to 3-hydroxypropionic acid, which is excreted. The sequence is that of Probable malonic semialdehyde reductase RutE from Escherichia coli O157:H7.